The primary structure comprises 107 residues: Iron-sulfur cluster assembly protein CyaY (107 aa).

This sequence belongs to the frataxin family.

Functionally, involved in iron-sulfur (Fe-S) cluster assembly. May act as a regulator of Fe-S biogenesis. The polypeptide is Iron-sulfur cluster assembly protein CyaY (Thioalkalivibrio sulfidiphilus (strain HL-EbGR7)).